Reading from the N-terminus, the 405-residue chain is Homocitrate synthase AksA (405 aa).

The Pyruvate carboxyltransferase domain occupies 23–274; the sequence is IEICDVTLRD…IERYDTTKLT (252 aa).

The protein belongs to the alpha-IPM synthase/homocitrate synthase family.

It catalyses the reaction acetyl-CoA + 2-oxoglutarate + H2O = (2R)-homocitrate + CoA + H(+). It carries out the reaction 2-oxoadipate + acetyl-CoA + H2O = (R)-dihomocitrate + CoA + H(+). The catalysed reaction is 2-oxoheptanedioate + acetyl-CoA + H2O = (R)-trihomocitrate + CoA + H(+). It participates in organic acid metabolism; 2-oxosuberate biosynthesis. Functionally, catalyzes the condensation of alpha-ketoglutarate and acetyl-CoA to form (R)-homocitrate. Can also catalyze the condensation of alpha-ketoadipate with acetyl-CoA to form (R)-homo(2)citrate, and the condensation of alpha-ketopimelate with acetyl-CoA to form (R)-homo(3)citrate. These reactions are part of the biosynthesis pathway of coenzyme B and biotin. The chain is Homocitrate synthase AksA (aksA) from Methanosarcina acetivorans (strain ATCC 35395 / DSM 2834 / JCM 12185 / C2A).